The following is a 256-amino-acid chain: Trans-aconitate 2-methyltransferase (256 aa).

The protein belongs to the methyltransferase superfamily. Tam family.

The protein resides in the cytoplasm. The enzyme catalyses trans-aconitate + S-adenosyl-L-methionine = (E)-3-(methoxycarbonyl)pent-2-enedioate + S-adenosyl-L-homocysteine. Its function is as follows. Catalyzes the S-adenosylmethionine monomethyl esterification of trans-aconitate. The protein is Trans-aconitate 2-methyltransferase of Afipia carboxidovorans (strain ATCC 49405 / DSM 1227 / KCTC 32145 / OM5) (Oligotropha carboxidovorans).